A 273-amino-acid chain; its full sequence is Orotidine 5'-phosphate decarboxylase (273 aa).

The active-site Proton donor is the K96.

It belongs to the OMP decarboxylase family. Type 2 subfamily.

It carries out the reaction orotidine 5'-phosphate + H(+) = UMP + CO2. The protein operates within pyrimidine metabolism; UMP biosynthesis via de novo pathway; UMP from orotate: step 2/2. This chain is Orotidine 5'-phosphate decarboxylase, found in Flavobacterium johnsoniae (strain ATCC 17061 / DSM 2064 / JCM 8514 / BCRC 14874 / CCUG 350202 / NBRC 14942 / NCIMB 11054 / UW101) (Cytophaga johnsonae).